We begin with the raw amino-acid sequence, 585 residues long: Zinc finger protein Eos (585 aa).

2 disordered regions span residues 1–43 (MHTP…PDFL) and 68–98 (EKEFLGAPVGPSVSTPNSQHSSPSRSLSANS). Basic and acidic residues predominate over residues 25-34 (QGKDNLERDP). Polar residues predominate over residues 79–98 (SVSTPNSQHSSPSRSLSANS). Lys-100 is covalently cross-linked (Glycyl lysine isopeptide (Lys-Gly) (interchain with G-Cter in SUMO2)). Ser-105 bears the Phosphoserine mark. 4 consecutive C2H2-type zinc fingers follow at residues 159-181 (LKCDVCGMVCIGPNVLMVHKRSH), 187-209 (FHCNQCGASFTQKGNLLRHIKLH), 215-237 (FKCPFCNYACRRRDALTGHLRTH), and 248-271 (YKCNYCGRSYKQQSTLEEHKERCH). Residues 281-585 (AQALAGQPGD…HIVRGEHKVG (305 aa)) are interaction with FOXP3. Lys-335 is modified (N6-acetyllysine). Residues 410–489 (PGRLELPGSR…QPPPTIVVGR (80 aa)) form a disordered region. The CTBP-binding motif PEDLA signature appears at 425–429 (PEDLA). Residues 475–484 (QGPPPQPPPT) are compositionally biased toward pro residues. A Glycyl lysine isopeptide (Lys-Gly) (interchain with G-Cter in SUMO2) cross-link involves residue Lys-500. 2 consecutive C2H2-type zinc fingers follow at residues 530–552 (FKCEHCRILFLDHVMFTIHMGCH) and 558–582 (FECNICGYHSQDRYEFSSHIVRGEH).

This sequence belongs to the Ikaros C2H2-type zinc-finger protein family. In terms of assembly, self-associates. Interacts with other family members; IKZF1, IKZF2, IKZF3 and IKZF5. Interacts with CTBP2. Interacts with SPI1, MITF, FOXP3 and CTBP1. As to expression, highly expressed in skeletal muscle, low levels of expression in heart, thymus, kidney, liver, and spleen. Expressed in the hematopoietic cell lines MOLT-4, NALM-6 and K-562. Highly expressed in THP-1 and M-07e cell lines, which have characteristics of myeloid and early megakaryocytic cells respectively.

The protein resides in the nucleus. Its function is as follows. DNA-binding protein that binds to the 5'GGGAATRCC-3' Ikaros-binding sequence. Transcriptional repressor. Interacts with SPI1 and MITF to repress transcription of the CTSK and ACP5 promoters via recruitment of corepressors SIN3A and CTBP2. May be involved in the development of central and peripheral nervous systems. Essential for the inhibitory function of regulatory T-cells (Treg). Mediates FOXP3-mediated gene silencing in regulatory T-cells (Treg) via recruitment of corepressor CTBP1. The protein is Zinc finger protein Eos (IKZF4) of Homo sapiens (Human).